Reading from the N-terminus, the 151-residue chain is Natriuretic peptides A (151 aa).

Residues 1–25 form the signal peptide; that stretch reads MSSFSTTTVSFLLLLAFQLLGQTRA. The interval 62–105 is disordered; it reads VLSEPNEEAGAALSPLPEVPPWTGEVSPAQRDGGALGRGPWDSS. Positions 93-103 are excised as a propeptide; the sequence is DGGALGRGPWD. Ser129 is subject to Phosphoserine. Cysteines 130 and 146 form a disulfide. An important for degradation of atrial natriuretic peptide by IDE region spans residues 147–151; that stretch reads NSFRY.

Belongs to the natriuretic peptide family. Homodimer; disulfide-linked antiparallel dimer. In terms of processing, the precursor molecule is proteolytically cleaved by CORIN at Arg-123 to produce atrial natriuretic peptide. Undergoes further proteolytic cleavage by unknown proteases to give rise to long-acting natriuretic peptide, vessel dilator and kaliuretic peptide. Additional processing gives rise to the auriculin and atriopeptin peptides. In the kidneys, alternative processing by an unknown protease results in the peptide urodilatin. Post-translationally, cleavage by MME initiates degradation of the factor and thereby regulates its activity. Degraded by IDE (in vitro). During IDE degradation, the resulting products can temporarily stimulate NPR2 to produce cGMP, before the fragments are completely degraded and inactivated by IDE (in vitro). Degraded by IDE. In terms of processing, phosphorylation on Ser-129 decreases vasorelaxant activity. In terms of tissue distribution, detected in the kidney distal tubular cells (at protein level). Present in urine (at protein level). As to expression, detected in atrial and ventricular plasma samples, and in adipocytes (at protein level). Detected in urine in one study. However, was not detected in urine in another study. In the brain, predominantly expressed in the gray matter with very weak expression in the white matter (at protein level). Localizes to astrocyte-like structures throughout the white matter, and in the cerebral vessels detected in the leptomeningeal and parenchymal vessels, and endothelium and smooth muscle layers (at protein level). Relatively low levels of expression in the kidneys compared to urodilatin (at protein level).

The protein resides in the secreted. It is found in the perikaryon. It localises to the cell projection. Hormone that plays a key role in mediating cardio-renal homeostasis, and is involved in vascular remodeling and regulating energy metabolism. Acts by specifically binding and stimulating NPR1 to produce cGMP, which in turn activates effector proteins, such as PRKG1, that drive various biological responses. Regulates vasodilation, natriuresis, diuresis and aldosterone synthesis and is therefore essential for regulating blood pressure, controlling the extracellular fluid volume and maintaining the fluid-electrolyte balance. Also involved in inhibiting cardiac remodeling and cardiac hypertrophy by inducing cardiomyocyte apoptosis and attenuating the growth of cardiomyocytes and fibroblasts. Plays a role in female pregnancy by promoting trophoblast invasion and spiral artery remodeling in uterus, and thus prevents pregnancy-induced hypertension. In adipose tissue, acts in various cGMP- and PKG-dependent pathways to regulate lipid metabolism and energy homeostasis. This includes up-regulating lipid metabolism and mitochondrial oxygen utilization by activating the AMP-activated protein kinase (AMPK), and increasing energy expenditure by acting via MAPK11 to promote the UCP1-dependent thermogenesis of brown adipose tissue. Binds the clearance receptor NPR3 which removes the hormone from circulation. In terms of biological role, may have a role in cardio-renal homeostasis through regulation of natriuresis, diuresis, vasodilation, and inhibiting aldosterone synthesis. In vitro, promotes the production of cGMP and induces vasodilation. May promote natriuresis, at least in part, by enhancing prostaglandin E2 synthesis resulting in the inhibition of renal Na+-K+-ATPase. However reports on the involvement of this peptide in mammal blood volume and blood pressure homeostasis are conflicting; according to a report, in vivo it is not sufficient to activate cGMP and does not inhibit collecting duct transport nor effect diuresis and natriuresis. Appears to bind to specific receptors that are distinct from the receptors bound by atrial natriuretic peptide and vessel dilator. Possibly enhances protein excretion in urine by decreasing proximal tubular protein reabsorption. Its function is as follows. May have a role in cardio-renal homeostasis through regulation of natriuresis, diuresis, and vasodilation. In vitro, promotes the production of cGMP and induces vasodilation. May promote natriuresis, at least in part, by enhancing prostaglandin E2 synthesis resulting in the inhibition of renal Na+-K+-ATPase. However reports on the involvement of this peptide in mammal blood volume and blood pressure homeostasis are conflicting; according to a report it is not sufficient to activate cGMP and does not inhibit collecting duct transport nor effect diuresis and natriuresis. Appears to bind to specific receptors that are distinct from the receptors bound by the atrial natriuretic and long-acting natriuretic peptides. Possibly functions in protein excretion in urine by maintaining the integrity of the proximal tubules and enhancing protein excretion by decreasing proximal tubular protein reabsorption. Functionally, may have a role in cardio-renal homeostasis through regulation of diuresis and inhibiting aldosterone synthesis. In vitro, promotes the production of cGMP and induces vasodilation. May promote natriuresis, at least in part, by enhancing prostaglandin E2 synthesis resulting in the inhibition of renal Na+-K+-ATPase. May have a role in potassium excretion but not sodium excretion (natriuresis). Possibly enhances protein excretion in urine by decreasing proximal tubular protein reabsorption. Hormone produced in the kidneys that appears to be important for maintaining cardio-renal homeostasis. Mediates vasodilation, natriuresis and diuresis primarily in the renal system, in order to maintain the extracellular fluid volume and control the fluid-electrolyte balance. Specifically binds and stimulates cGMP production by renal transmembrane receptors, likely NPR1. Urodilatin not ANP, may be the natriuretic peptide responsible for the regulation of sodium and water homeostasis in the kidney. In terms of biological role, may have a role in cardio-renal homeostasis through regulation of natriuresis and vasodilation. In vivo promotes natriuresis and in vitro, vasodilates renal artery strips. Its function is as follows. May have a role in cardio-renal homeostasis through regulation of regulation of natriuresis and vasodilation. In vivo promotes natriuresis. In vitro, vasodilates intestinal smooth muscle but not smooth muscle strips. Functionally, may have a role in cardio-renal homeostasis through regulation of natriuresis and vasodilation. In vivo promotes natriuresis. In vitro, selectively vasodilates intestinal and vascular smooth muscle strips. May have a role in cardio-renal homeostasis through regulation of natriuresis and vasodilation. In vivo promotes natriuresis. In vitro, selectively vasodilates intestinal smooth muscle but not vascular smooth muscle strips. This Homo sapiens (Human) protein is Natriuretic peptides A (NPPA).